Reading from the N-terminus, the 67-residue chain is DNA-directed RNA polymerase subunit omega (67 aa).

Belongs to the RNA polymerase subunit omega family. The RNAP catalytic core consists of 2 alpha, 1 beta, 1 beta' and 1 omega subunit. When a sigma factor is associated with the core the holoenzyme is formed, which can initiate transcription.

It carries out the reaction RNA(n) + a ribonucleoside 5'-triphosphate = RNA(n+1) + diphosphate. In terms of biological role, promotes RNA polymerase assembly. Latches the N- and C-terminal regions of the beta' subunit thereby facilitating its interaction with the beta and alpha subunits. In Burkholderia ambifaria (strain ATCC BAA-244 / DSM 16087 / CCUG 44356 / LMG 19182 / AMMD) (Burkholderia cepacia (strain AMMD)), this protein is DNA-directed RNA polymerase subunit omega.